Reading from the N-terminus, the 655-residue chain is p-hydroxybenzoic acid efflux pump subunit AaeB (655 aa).

The next 11 helical transmembrane spans lie at 13–33 (FAVKLACAIVLALFIGFHFQL), 38–58 (WAVLTAAIVAAGPAFAAGGEP), 69–89 (LRIIGTFIGCIAALIIIISMI), 93–113 (LLMILVCCVWAGFCTWISSLV), 121–141 (WGLSGYTALIIVITIQMEPLL), 152–172 (EIVIGIGCAILADLLFSPRSI), 370–390 (LFWLWTGWTSGNGAMVMIAVV), 407–427 (FIYGTLAALPLGLLYFLVIIP), 431–451 (QSMLLLCLSLAVLGFFIGIEV), 459–479 (MGALASTINIIVLDNPMTFHF), and 482–502 (FLDSALGQIVGCMLAFIVILL).

It belongs to the aromatic acid exporter ArAE (TC 2.A.85) family.

It is found in the cell inner membrane. In terms of biological role, forms an efflux pump with AaeA. Could function as a metabolic relief valve, allowing to eliminate certain compounds when they accumulate to high levels in the cell. In Salmonella heidelberg (strain SL476), this protein is p-hydroxybenzoic acid efflux pump subunit AaeB.